Reading from the N-terminus, the 219-residue chain is RNA-free ribonuclease P (219 aa).

It belongs to the HARP family.

It carries out the reaction Endonucleolytic cleavage of RNA, removing 5'-extranucleotides from tRNA precursor.. Its function is as follows. RNA-free RNase P that catalyzes the removal of the 5'-leader sequence from pre-tRNA to produce the mature 5'-terminus. This is RNA-free ribonuclease P from Staphylothermus marinus (strain ATCC 43588 / DSM 3639 / JCM 9404 / F1).